The sequence spans 458 residues: Chromosomal replication initiator protein DnaA (458 aa).

The domain I, interacts with DnaA modulators stretch occupies residues 1–84 (MENIWLEAQT…FHVAEEKPEA (84 aa)). Over residues 80 to 119 (EKPEAAHEAKPEKEAKPAREKERDKDKEKEKDREKEKKEL) the composition is skewed to basic and acidic residues. Residues 80-120 (EKPEAAHEAKPEKEAKPAREKERDKDKEKEKDREKEKKELV) form a disordered region. Residues 84 to 121 (AAHEAKPEKEAKPAREKERDKDKEKEKDREKEKKELVP) form a domain II region. Positions 122 to 338 (NLNPKYTFES…GMLIRLEAFA (217 aa)) are domain III, AAA+ region. Residues Gly166, Gly168, Lys169, and Thr170 each coordinate ATP. A domain IV, binds dsDNA region spans residues 339–458 (SLTGQEITLS…VEDIRKKLFT (120 aa)).

This sequence belongs to the DnaA family. In terms of assembly, oligomerizes as a right-handed, spiral filament on DNA at oriC.

The protein resides in the cytoplasm. Its function is as follows. Plays an essential role in the initiation and regulation of chromosomal replication. ATP-DnaA binds to the origin of replication (oriC) to initiate formation of the DNA replication initiation complex once per cell cycle. Binds the DnaA box (a 9 base pair repeat at the origin) and separates the double-stranded (ds)DNA. Forms a right-handed helical filament on oriC DNA; dsDNA binds to the exterior of the filament while single-stranded (ss)DNA is stabiized in the filament's interior. The ATP-DnaA-oriC complex binds and stabilizes one strand of the AT-rich DNA unwinding element (DUE), permitting loading of DNA polymerase. After initiation quickly degrades to an ADP-DnaA complex that is not apt for DNA replication. Binds acidic phospholipids. The sequence is that of Chromosomal replication initiator protein DnaA from Citrifermentans bemidjiense (strain ATCC BAA-1014 / DSM 16622 / JCM 12645 / Bem) (Geobacter bemidjiensis).